The sequence spans 126 residues: Fluoride-specific ion channel FluC (126 aa).

A run of 3 helical transmembrane segments spans residues 35-55, 71-91, and 101-121; these read WWTL…IGLL, VGML…WLLF, and LYVV…MILI. Na(+) contacts are provided by glycine 75 and threonine 78.

Belongs to the fluoride channel Fluc/FEX (TC 1.A.43) family.

It localises to the cell inner membrane. The enzyme catalyses fluoride(in) = fluoride(out). Na(+) is not transported, but it plays an essential structural role and its presence is essential for fluoride channel function. In terms of biological role, fluoride-specific ion channel. Important for reducing fluoride concentration in the cell, thus reducing its toxicity. The polypeptide is Fluoride-specific ion channel FluC (Sphingopyxis alaskensis (strain DSM 13593 / LMG 18877 / RB2256) (Sphingomonas alaskensis)).